A 289-amino-acid polypeptide reads, in one-letter code: Borealin (289 aa).

Residues M1 to I58 are required for interaction with INCENP. Residues M1 to K88 are required for centromere localization. A required for interaction with SENP3 region spans residues M1–A150. The tract at residues G10–K109 is required to form a minimal CPC core complex that localizes to the central spindle and midbody and properly executes the role of the CPC during cytokinesis. The segment at K20–G78 is required for interaction with INCENP and BIRC5. Position 91 is a citrulline (R91). A Phosphothreonine; by TTK modification is found at T94. Position 106 is a phosphothreonine (T106). S110 bears the Phosphoserine mark. Positions S122–R173 are disordered. Residues I123–G133 are compositionally biased toward acidic residues. Over residues R139–T162 the composition is skewed to basic residues. K145 is covalently cross-linked (Glycyl lysine isopeptide (Lys-Gly) (interchain with G-Cter in SUMO2)). A Phosphoserine modification is found at S175. Phosphothreonine is present on residues T198 and T213. Phosphoserine is present on residues S228, S233, S247, and S253.

The protein belongs to the borealin family. May form homooligomers and homodimers. Component of the chromosomal passenger complex (CPC) composed of at least BIRC5/survivin, CDCA8/borealin, INCENP, AURKB or AURKC; in the complex forms a triple-helix bundle-based subcomplex with INCENP and BIRC5. Interacts with SENP3, UBE2I and RANBP2. Interacts (phosphorylated) with SGO1 and SGO2A; the association is dependent on CDK1. Post-translationally, phosphorylated by TTK, essentially at Thr-94. Phosphorylation (probably by CDK1) promotes targeting of the CPC to centromeric DNA. Sumoylated by UBE2I and RANBP2. Desumoylated by SENP3 through the removal of SUMO2 and SUMO3. In terms of processing, citrullinated by PADI4.

The protein resides in the nucleus. Its subcellular location is the nucleolus. The protein localises to the cytoplasm. It localises to the chromosome. It is found in the centromere. The protein resides in the cytoskeleton. Its subcellular location is the spindle. In terms of biological role, component of the chromosomal passenger complex (CPC), a complex that acts as a key regulator of mitosis. The CPC complex has essential functions at the centromere in ensuring correct chromosome alignment and segregation and is required for chromatin-induced microtubule stabilization and spindle assembly. In the complex, it may be required to direct the CPC to centromeric DNA. Major effector of the TTK kinase in the control of attachment-error-correction and chromosome alignment. This Mus musculus (Mouse) protein is Borealin (Cdca8).